Here is a 151-residue protein sequence, read N- to C-terminus: Ribosome maturation factor RimP (151 aa).

This sequence belongs to the RimP family.

The protein resides in the cytoplasm. Required for maturation of 30S ribosomal subunits. In Hydrogenovibrio crunogenus (strain DSM 25203 / XCL-2) (Thiomicrospira crunogena), this protein is Ribosome maturation factor RimP.